The following is a 163-amino-acid chain: uncharacterized protein (163 aa).

Positions 1-10 (MTHPLPHDSH) are enriched in basic and acidic residues. Disordered stretches follow at residues 1-21 (MTHPLPHDSHTSGAPPLVNKS) and 71-112 (SKQP…EQRR). Residues 90–105 (PASSLQDHSRLTSLSR) are compositionally biased toward polar residues.

This is an uncharacterized protein from Homo sapiens (Human).